Consider the following 430-residue polypeptide: UDP-N-acetylglucosamine 1-carboxyvinyltransferase 1 (430 aa).

22 to 23 provides a ligand contact to phosphoenolpyruvate; it reads KN. UDP-N-acetyl-alpha-D-glucosamine is bound at residue arginine 93. Cysteine 117 acts as the Proton donor in catalysis. Cysteine 117 carries the post-translational modification 2-(S-cysteinyl)pyruvic acid O-phosphothioketal. UDP-N-acetyl-alpha-D-glucosamine is bound by residues 122-126, aspartate 305, and valine 327; that span reads RPVDL.

This sequence belongs to the EPSP synthase family. MurA subfamily.

It is found in the cytoplasm. It carries out the reaction phosphoenolpyruvate + UDP-N-acetyl-alpha-D-glucosamine = UDP-N-acetyl-3-O-(1-carboxyvinyl)-alpha-D-glucosamine + phosphate. It participates in cell wall biogenesis; peptidoglycan biosynthesis. Cell wall formation. Adds enolpyruvyl to UDP-N-acetylglucosamine. The chain is UDP-N-acetylglucosamine 1-carboxyvinyltransferase 1 from Listeria monocytogenes serovar 1/2a (strain ATCC BAA-679 / EGD-e).